A 341-amino-acid chain; its full sequence is Dehydration-responsive element-binding protein 2C (341 aa).

The Nuclear localization signal motif lies at 8 to 48 (RKRKSRGTRDVAEILRQWREYNEQIEAESCIDGGGPKSIRK). The interval 36-63 (SCIDGGGPKSIRKPPPKGSRKGCMKGKG) is disordered. Positions 45–59 (SIRKPPPKGSRKGCM) are enriched in basic residues. The AP2/ERF DNA-binding region spans 71 to 128 (DYRGVRQRRWGKWVAEIREPDGGARLWLGTFSSSYEAALAYDEAAKAIYGQSARLNLP).

Belongs to the AP2/ERF transcription factor family. ERF subfamily.

Its subcellular location is the nucleus. In terms of biological role, transcriptional activator that binds specifically to the DNA sequence 5'-[AG]CCGAC-3'. Binding to the C-repeat/DRE element mediates high salinity- and abscisic acid-inducible transcription. This Arabidopsis thaliana (Mouse-ear cress) protein is Dehydration-responsive element-binding protein 2C (DREB2C).